The primary structure comprises 404 residues: Probable glucan endo-1,6-beta-glucosidase B (404 aa).

The N-terminal stretch at 1-20 is a signal peptide; sequence MTTYQTLFLIPLAISTLVTA. N-linked (GlcNAc...) asparagine glycans are attached at residues Asn-33 and Asn-130. The active-site Proton donor is Glu-222. Residues Asn-253 and Asn-299 are each glycosylated (N-linked (GlcNAc...) asparagine). The active-site Nucleophile is the Glu-324.

Belongs to the glycosyl hydrolase 5 (cellulase A) family.

The protein resides in the secreted. The catalysed reaction is Random hydrolysis of (1-&gt;6)-linkages in (1-&gt;6)-beta-D-glucans.. Its function is as follows. Beta-glucanases participate in the metabolism of beta-glucan, the main structural component of the cell wall. Acts on lutean, pustulan and 1,6-oligo-beta-D-glucosides. This Aspergillus terreus (strain NIH 2624 / FGSC A1156) protein is Probable glucan endo-1,6-beta-glucosidase B (exgB).